The following is a 439-amino-acid chain: Serine--tRNA ligase (439 aa).

L-serine is bound at residue 247 to 249; it reads TSE. Residue 278-280 participates in ATP binding; it reads RSE. Residue Glu-301 participates in L-serine binding. 365–368 lines the ATP pocket; the sequence is EISS. Residue Ser-400 participates in L-serine binding.

Belongs to the class-II aminoacyl-tRNA synthetase family. Type-1 seryl-tRNA synthetase subfamily. In terms of assembly, homodimer. The tRNA molecule binds across the dimer.

It localises to the cytoplasm. The catalysed reaction is tRNA(Ser) + L-serine + ATP = L-seryl-tRNA(Ser) + AMP + diphosphate + H(+). The enzyme catalyses tRNA(Sec) + L-serine + ATP = L-seryl-tRNA(Sec) + AMP + diphosphate + H(+). It functions in the pathway aminoacyl-tRNA biosynthesis; selenocysteinyl-tRNA(Sec) biosynthesis; L-seryl-tRNA(Sec) from L-serine and tRNA(Sec): step 1/1. In terms of biological role, catalyzes the attachment of serine to tRNA(Ser). Is also able to aminoacylate tRNA(Sec) with serine, to form the misacylated tRNA L-seryl-tRNA(Sec), which will be further converted into selenocysteinyl-tRNA(Sec). The polypeptide is Serine--tRNA ligase (Paracidovorax citrulli (strain AAC00-1) (Acidovorax citrulli)).